The chain runs to 1275 residues: MKLSNELFHRSSKDHGGKSRICLDSSEDTYPPHSSSPPSFQKRLSFSDFSTTRLFSPPFLSKRSNNSPHRFSYSPPQHPASINSRRVASYTVQSSPSRTTYRQLPNEPQNSAAYTTYSSFPNALFDDFSPNNPLDTDPFLTSPGNKQNTVDSFRPLPETPVSPGGSLVHPLPRPPLPSSVSSHSSPYSTTSSTSLYSLYNDISLSCSPEPYLPLSPTRSPARTPSPIRLYSSDALRPQSPLSPSVEYLTPPNPYSLKSDISSTRQLPKIPVQDYASGKISSPLITRTHRRAQSETLFSSCREPWLVGKLYKWCKEEVFTALGGLVHEGVSRREVAQVMATLFTIHIASMEFLIAEIIAKNILGDWINYGLVEVINLEKLQIAFTSNEPPSGSGVLPFLTNGGCYSYICRSRSCPSKYQCYSCRCARNSSLEFTSLPGQSSDTWSIFWNISSLNSLPSSLSKREIARQNNIHELICKESDYVADLNTLAELFRDGIVQQQDAIVPSNRVADFIQSVFGNVESIRQLHSRLFLPQLIMRERLQGPVVSIIGDILLEWIHAAKSSYINYAKQFPLADETYKLECQRNTYFARWLAACRSDPRCRRLDFQHFLQRPTQRLQRYTLELDTILKHTEQSSWDFQLITQAVKELRATCEECDAVIATVLEANRIRDLSYQLLFKNHESVNLELRDPEREFFFEGIVQRRSDSRLDWLDIHLFLLDNYLIMAKARKDKRTNASRYVVSKRPIPLDLLVLSPKMDDFQLKSNTNKFLGSLAGNLPQESLTTKSKRKSKVNLELMFDATAEKNNENSMNSAVFEKSQLYPFTIRHLGAYTASYTLYVESLQLRKLWVEKINVAKKRHSQKINIKNPFALKVVSDVAFQYPPSDLVNGNEPLNSFNEITLVEGSSIDRALNEVAWKHPIVSEELLPEPIAYGDISCIAQFNDYEGHVSVLIATSTGIFLGAFGDSSDIRDWKKISSQRRVTQLGVVEEFDILLELRDKTLYAHKLSRIIEMGLIESKIAVVIGTPHAVSFFKIGKLSEGASVKRERTLVFYKEGLGNTTTIICCEPVIGLGHNYQKTYAFKRKDVTSFRTLDDFHVTANCHSIDCFKYSIALCHNKGIDVLRLDPKLAVGFPSPSVLNDTLFRNRINNSKPLGVFRIHDPSLFACCYQFGAVFVNGEGSMVNKECWFDWIGKPNSVTSCHGYLIAFNDEFVEIWNTRTRKLNQIIQGNDIKYYPSNSDWLANGKYIMFGMVHPQYHDRHLILALNKAKTNSFIIED.

4 disordered regions span residues 1-42, 56-113, 131-188, and 214-248; these read MKLS…SFQK, SPPF…NSAA, NNPL…SPYS, and LSPTRSPARTPSPIRLYSSDALRPQSPLSPSVEYL. Over residues 7–17 the composition is skewed to basic and acidic residues; the sequence is LFHRSSKDHGG. Polar residues-rich tracts occupy residues 32 to 42, 80 to 113, and 142 to 151; these read PHSSSPPSFQK, ASINSRRVASYTVQSSPSRTTYRQLPNEPQNSAA, and SPGNKQNTVD. 2 stretches are compositionally biased toward low complexity: residues 178–188 and 214–228; these read SSVSSHSSPYS and LSPTRSPARTPSPIR. Ser-293 carries the post-translational modification Phosphoserine. Residues 465 to 657 enclose the DH domain; sequence ARQNNIHELI…RATCEECDAV (193 aa). The region spanning 692-855 is the PH domain; sequence EFFFEGIVQR…WVEKINVAKK (164 aa). Residues 930 to 1239 form the CNH domain; the sequence is YGDISCIAQF…KYYPSNSDWL (310 aa).

It localises to the cytoplasm. Stimulates the exchange of Rho1 GDP-bound form into GTP-bound form. Regulates, via interaction and activation of Rho1, beta-1,3-glucan biosynthesis and cell wall integrity during septation. Involved in the regulation of contractile ring assembly. The sequence is that of Rho1 guanine nucleotide exchange factor 3 (rgf3) from Schizosaccharomyces pombe (strain 972 / ATCC 24843) (Fission yeast).